We begin with the raw amino-acid sequence, 126 residues long: Major sperm protein 1 (126 aa).

Residue alanine 2 is modified to N-acetylalanine. The MSP domain occupies 8 to 125; it reads DIATMPAQKV…RRKNLPIEYN (118 aa).

Sperm.

The protein resides in the cell projection. It is found in the pseudopodium. It localises to the cytoplasm. The protein localises to the cytoskeleton. Functionally, central component in molecular interactions underlying sperm crawling. Forms an extensive filament system that extends from sperm villipoda, along the leading edge of the pseudopod. The sequence is that of Major sperm protein 1 (MSP-1) from Globodera rostochiensis (Golden nematode worm).